The following is a 297-amino-acid chain: Flavin-dependent thymidylate synthase (297 aa).

Positions 41 to 251 (GFVRLVDYMG…PLTYAAFVEY (211 aa)) constitute a ThyX domain. FAD-binding positions include Thr-87, 110-112 (RHR), and Glu-118. DUMP contacts are provided by residues 107-110 (QWVR), 118-122 (EYSAR), and Arg-190. A ThyX motif motif is present at residues 110–120 (RHRTANVNEYS). Residues 206–208 (DLH) and His-212 each bind FAD. DUMP is bound at residue Arg-217. Catalysis depends on Arg-217, which acts as the Involved in ionization of N3 of dUMP, leading to its activation.

The protein belongs to the thymidylate synthase ThyX family. In terms of assembly, homotetramer. FAD is required as a cofactor.

It catalyses the reaction dUMP + (6R)-5,10-methylene-5,6,7,8-tetrahydrofolate + NADPH + H(+) = dTMP + (6S)-5,6,7,8-tetrahydrofolate + NADP(+). Its pathway is pyrimidine metabolism; dTTP biosynthesis. Catalyzes the reductive methylation of 2'-deoxyuridine-5'-monophosphate (dUMP) to 2'-deoxythymidine-5'-monophosphate (dTMP) while utilizing 5,10-methylenetetrahydrofolate (mTHF) as the methyl donor, and NADPH and FADH(2) as the reductant. This chain is Flavin-dependent thymidylate synthase, found in Ehrlichia ruminantium (strain Gardel).